The sequence spans 261 residues: Cytochrome c oxidase subunit 3 (261 aa).

Residues 1 to 15 (MAHQAHAYHMVDPSP) are Mitochondrial matrix-facing. A helical transmembrane segment spans residues 16–34 (WPLTGAVAALLMTSGLAVW). The Mitochondrial intermembrane portion of the chain corresponds to 35–40 (FHFHSM). Residues 41 to 66 (YLLYLGLTLLLLTMVQWWRDIIREGT) form a helical membrane-spanning segment. Residues 67-72 (FQGHHT) lie on the Mitochondrial matrix side of the membrane. A helical membrane pass occupies residues 73-105 (PPVQKGLRYGMILFITSEVFFFLGFFWAFYHSS). Residues 106 to 128 (LAPTPELGGCWPPTGIYPLDPFE) lie on the Mitochondrial intermembrane side of the membrane. A helical membrane pass occupies residues 129–152 (VPLLNTAVLLASGVTVTWAHHSLM). At 153-155 (EGN) the chain is on the mitochondrial matrix side. The chain crosses the membrane as a helical span at residues 156–183 (RKEAIQALTLTVLLGFYFTALQAMEYYE). Topologically, residues 184–190 (APFTIAD) are mitochondrial intermembrane. A helical transmembrane segment spans residues 191 to 223 (GVYGSTFFVATGFHGLHVIIGSTFLMVCLLRQI). The Mitochondrial matrix portion of the chain corresponds to 224–232 (QYHFTSEHH). The helical transmembrane segment at 233–256 (FGFERAAWYWHFVDVVWLFLYVSI) threads the bilayer. At 257-261 (YWWGS) the chain is on the mitochondrial intermembrane side.

It belongs to the cytochrome c oxidase subunit 3 family. In terms of assembly, component of the cytochrome c oxidase (complex IV, CIV), a multisubunit enzyme composed of 14 subunits. The complex is composed of a catalytic core of 3 subunits MT-CO1, MT-CO2 and MT-CO3, encoded in the mitochondrial DNA, and 11 supernumerary subunits COX4I, COX5A, COX5B, COX6A, COX6B, COX6C, COX7A, COX7B, COX7C, COX8 and NDUFA4, which are encoded in the nuclear genome. The complex exists as a monomer or a dimer and forms supercomplexes (SCs) in the inner mitochondrial membrane with NADH-ubiquinone oxidoreductase (complex I, CI) and ubiquinol-cytochrome c oxidoreductase (cytochrome b-c1 complex, complex III, CIII), resulting in different assemblies (supercomplex SCI(1)III(2)IV(1) and megacomplex MCI(2)III(2)IV(2)).

It localises to the mitochondrion inner membrane. The catalysed reaction is 4 Fe(II)-[cytochrome c] + O2 + 8 H(+)(in) = 4 Fe(III)-[cytochrome c] + 2 H2O + 4 H(+)(out). Functionally, component of the cytochrome c oxidase, the last enzyme in the mitochondrial electron transport chain which drives oxidative phosphorylation. The respiratory chain contains 3 multisubunit complexes succinate dehydrogenase (complex II, CII), ubiquinol-cytochrome c oxidoreductase (cytochrome b-c1 complex, complex III, CIII) and cytochrome c oxidase (complex IV, CIV), that cooperate to transfer electrons derived from NADH and succinate to molecular oxygen, creating an electrochemical gradient over the inner membrane that drives transmembrane transport and the ATP synthase. Cytochrome c oxidase is the component of the respiratory chain that catalyzes the reduction of oxygen to water. Electrons originating from reduced cytochrome c in the intermembrane space (IMS) are transferred via the dinuclear copper A center (CU(A)) of subunit 2 and heme A of subunit 1 to the active site in subunit 1, a binuclear center (BNC) formed by heme A3 and copper B (CU(B)). The BNC reduces molecular oxygen to 2 water molecules using 4 electrons from cytochrome c in the IMS and 4 protons from the mitochondrial matrix. The protein is Cytochrome c oxidase subunit 3 (MT-CO3) of Squalus acanthias (Spiny dogfish).